Reading from the N-terminus, the 311-residue chain is Methionyl-tRNA formyltransferase (311 aa).

A (6S)-5,6,7,8-tetrahydrofolate-binding site is contributed by 112-115 (SLLP).

It belongs to the Fmt family.

It catalyses the reaction L-methionyl-tRNA(fMet) + (6R)-10-formyltetrahydrofolate = N-formyl-L-methionyl-tRNA(fMet) + (6S)-5,6,7,8-tetrahydrofolate + H(+). In terms of biological role, attaches a formyl group to the free amino group of methionyl-tRNA(fMet). The formyl group appears to play a dual role in the initiator identity of N-formylmethionyl-tRNA by promoting its recognition by IF2 and preventing the misappropriation of this tRNA by the elongation apparatus. This chain is Methionyl-tRNA formyltransferase, found in Bradyrhizobium sp. (strain ORS 278).